The chain runs to 391 residues: Multidrug resistance protein MdtL (391 aa).

The next 12 helical transmembrane spans lie at 4-24 (FLIC…MYLV), 42-62 (IAFS…GKVA), 69-89 (PVAI…SLAE), 93-113 (LFLA…VVAF), 131-151 (LLNG…HLIM), 158-178 (SLFW…LFIL), 203-222 (FFLS…LTFV), 245-265 (ALTA…LGIF), 269-289 (TLMI…AVSP), 293-313 (VSLF…GVAM), 331-351 (LGIA…VVGI), and 356-376 (MLIG…MFVA).

Belongs to the major facilitator superfamily. DHA1 family. MdtL (TC 2.A.1.2.22) subfamily.

It is found in the cell inner membrane. Functionally, confers resistance to chloramphenicol. The sequence is that of Multidrug resistance protein MdtL from Escherichia coli (strain SMS-3-5 / SECEC).